Here is a 335-residue protein sequence, read N- to C-terminus: Zinc-type alcohol dehydrogenase-like protein SAV2186 (335 aa).

Belongs to the zinc-containing alcohol dehydrogenase family. Quinone oxidoreductase subfamily.

The protein is Zinc-type alcohol dehydrogenase-like protein SAV2186 of Staphylococcus aureus (strain Mu50 / ATCC 700699).